A 290-amino-acid chain; its full sequence is Release factor glutamine methyltransferase (290 aa).

S-adenosyl-L-methionine-binding residues include aspartate 140 and asparagine 181. Residue 181 to 184 (NPPY) participates in substrate binding.

The protein belongs to the protein N5-glutamine methyltransferase family. PrmC subfamily.

The enzyme catalyses L-glutaminyl-[peptide chain release factor] + S-adenosyl-L-methionine = N(5)-methyl-L-glutaminyl-[peptide chain release factor] + S-adenosyl-L-homocysteine + H(+). Functionally, methylates the class 1 translation termination release factors RF1/PrfA and RF2/PrfB on the glutamine residue of the universally conserved GGQ motif. The polypeptide is Release factor glutamine methyltransferase (Chlamydia trachomatis serovar D (strain ATCC VR-885 / DSM 19411 / UW-3/Cx)).